The following is a 2153-amino-acid chain: RNA-directed RNA polymerase L (2153 aa).

5 residues coordinate Mn(2+): histidine 36, glutamate 54, aspartate 97, glutamate 110, and valine 111. Lysine 124 serves as the catalytic For endonuclease activity. The 187-residue stretch at 957–1143 (TGKKIRFKRK…AVNQEMWKSM (187 aa)) folds into the RdRp catalytic domain. Position 1100 (aspartate 1100) interacts with Mg(2+).

It belongs to the Bunyavirales RNA polymerase family. Interacts with the viral nucleoprotein. Requires Mn(2+) as cofactor. Mg(2+) is required as a cofactor.

Its subcellular location is the host cytoplasm. It localises to the host perinuclear region. It catalyses the reaction RNA(n) + a ribonucleoside 5'-triphosphate = RNA(n+1) + diphosphate. Functionally, RNA-dependent RNA polymerase, which is responsible for the replication and transcription of the viral RNA genome using antigenomic RNA as an intermediate. During transcription, synthesizes subgenomic RNAs and assures their capping by a cap-snatching mechanism, which involves the endonuclease activity cleaving the host capped pre-mRNAs. These short capped RNAs are then used as primers for viral transcription. Cleaves ssRNA substrates but not DNA. Seems to downregulate the expression of its own and heterologous mRNAs through its endonuclease activity. The chain is RNA-directed RNA polymerase L from Black Creek Canal orthohantavirus (BCCV).